Here is a 64-residue protein sequence, read N- to C-terminus: Translation machinery-associated protein 7 homolog (64 aa).

Residues 1 to 64 form a disordered region; it reads MSGREGGKKK…GGGIKKSGKK (64 aa). The segment covering 27–38 has biased composition (basic and acidic residues); that stretch reads MAFKQKQKEQQK. Positions 27 to 50 form a coiled coil; the sequence is MAFKQKQKEQQKALEAAKANASKK. The segment covering 39–50 has biased composition (low complexity); the sequence is ALEAAKANASKK. The span at 53 to 64 shows a compositional bias: gly residues; the sequence is LVGGGIKKSGKK.

The sequence is that of Translation machinery-associated protein 7 homolog from Drosophila melanogaster (Fruit fly).